Reading from the N-terminus, the 879-residue chain is Valine--tRNA ligase (879 aa).

The short motif at 43-53 is the 'HIGH' region element; that stretch reads PNVTGVLHMGH. Residues 534–538 carry the 'KMSKS' region motif; sequence KMSKS. Lys-537 is a binding site for ATP. Residues 807-878 are a coiled coil; sequence LGNMIDVEAE…LKESIAALKK (72 aa).

It belongs to the class-I aminoacyl-tRNA synthetase family. ValS type 1 subfamily. In terms of assembly, monomer.

The protein resides in the cytoplasm. The enzyme catalyses tRNA(Val) + L-valine + ATP = L-valyl-tRNA(Val) + AMP + diphosphate. Catalyzes the attachment of valine to tRNA(Val). As ValRS can inadvertently accommodate and process structurally similar amino acids such as threonine, to avoid such errors, it has a 'posttransfer' editing activity that hydrolyzes mischarged Thr-tRNA(Val) in a tRNA-dependent manner. The sequence is that of Valine--tRNA ligase from Bacteroides thetaiotaomicron (strain ATCC 29148 / DSM 2079 / JCM 5827 / CCUG 10774 / NCTC 10582 / VPI-5482 / E50).